A 191-amino-acid polypeptide reads, in one-letter code: Fe/S biogenesis protein NfuA (191 aa).

[4Fe-4S] cluster-binding residues include C149 and C152.

It belongs to the NfuA family. Homodimer. Requires [4Fe-4S] cluster as cofactor.

In terms of biological role, involved in iron-sulfur cluster biogenesis. Binds a 4Fe-4S cluster, can transfer this cluster to apoproteins, and thereby intervenes in the maturation of Fe/S proteins. Could also act as a scaffold/chaperone for damaged Fe/S proteins. The polypeptide is Fe/S biogenesis protein NfuA (Escherichia coli O139:H28 (strain E24377A / ETEC)).